A 434-amino-acid polypeptide reads, in one-letter code: Methylenetetrahydrofolate--tRNA-(uracil-5-)-methyltransferase TrmFO (434 aa).

An FAD-binding site is contributed by 10-15 (GAGLAG).

The protein belongs to the MnmG family. TrmFO subfamily. The cofactor is FAD.

Its subcellular location is the cytoplasm. The enzyme catalyses uridine(54) in tRNA + (6R)-5,10-methylene-5,6,7,8-tetrahydrofolate + NADH + H(+) = 5-methyluridine(54) in tRNA + (6S)-5,6,7,8-tetrahydrofolate + NAD(+). The catalysed reaction is uridine(54) in tRNA + (6R)-5,10-methylene-5,6,7,8-tetrahydrofolate + NADPH + H(+) = 5-methyluridine(54) in tRNA + (6S)-5,6,7,8-tetrahydrofolate + NADP(+). In terms of biological role, catalyzes the folate-dependent formation of 5-methyl-uridine at position 54 (M-5-U54) in all tRNAs. The polypeptide is Methylenetetrahydrofolate--tRNA-(uracil-5-)-methyltransferase TrmFO (Bacillus cytotoxicus (strain DSM 22905 / CIP 110041 / 391-98 / NVH 391-98)).